Here is a 275-residue protein sequence, read N- to C-terminus: Glucosamine-6-phosphate deaminase 2 (275 aa).

The active-site Proton acceptor; for enolization step is Asp-72. Positions 102–131 (NNAHILDGNASDLQAECEDFERKIKEAGGI) form a coiled coil. Catalysis depends on Asp-141, which acts as the For ring-opening step. The Proton acceptor; for ring-opening step role is filled by His-143. The active-site For ring-opening step is the Glu-148.

It belongs to the glucosamine/galactosamine-6-phosphate isomerase family. As to quaternary structure, homohexamer.

The protein resides in the cytoplasm. The catalysed reaction is alpha-D-glucosamine 6-phosphate + H2O = beta-D-fructose 6-phosphate + NH4(+). Its function is as follows. Catalyzes the reversible conversion of alpha-D-glucosamine 6-phosphate (GlcN-6P) into beta-D-fructose 6-phosphate (Fru-6P) and ammonium ion, a regulatory reaction step in de novo uridine diphosphate-N-acetyl-alpha-D-glucosamine (UDP-GlcNAc) biosynthesis via hexosamine pathway. This is Glucosamine-6-phosphate deaminase 2 from Xenopus laevis (African clawed frog).